The following is a 184-amino-acid chain: Inner membrane-spanning protein YciB (184 aa).

A run of 5 helical transmembrane segments spans residues 19–39, 52–72, 76–96, 123–143, and 151–171; these read LVGI…QLLI, LFMG…NQLE, WKVT…QYGF, LGWA…SQYL, and FKTF…GIYI.

This sequence belongs to the YciB family.

The protein localises to the cell inner membrane. In terms of biological role, plays a role in cell envelope biogenesis, maintenance of cell envelope integrity and membrane homeostasis. This Pasteurella multocida (strain Pm70) protein is Inner membrane-spanning protein YciB.